The sequence spans 123 residues: Ig heavy chain V region HPCG13 (123 aa).

In terms of domain architecture, Ig-like spans 1 to 114; the sequence is EVKLVESGGG…GSYWYFDVWG (114 aa).

This is Ig heavy chain V region HPCG13 from Mus musculus (Mouse).